Here is a 137-residue protein sequence, read N- to C-terminus: S-protein homolog 16 (137 aa).

An N-terminal signal peptide occupies residues Met1–Gly21. The N-linked (GlcNAc...) asparagine glycan is linked to Asn87.

This sequence belongs to the plant self-incompatibility (S1) protein family.

It is found in the secreted. This chain is S-protein homolog 16, found in Arabidopsis thaliana (Mouse-ear cress).